Consider the following 381-residue polypeptide: 1-deoxy-D-xylulose 5-phosphate reductoisomerase (381 aa).

6 residues coordinate NADPH: threonine 11, glycine 12, serine 13, isoleucine 14, asparagine 37, and asparagine 121. 1-deoxy-D-xylulose 5-phosphate is bound at residue lysine 122. Glutamate 123 contributes to the NADPH binding site. Residue aspartate 147 coordinates Mn(2+). Residues serine 148, glutamate 149, serine 173, and histidine 196 each coordinate 1-deoxy-D-xylulose 5-phosphate. Glutamate 149 contacts Mn(2+). Glycine 202 contacts NADPH. 1-deoxy-D-xylulose 5-phosphate contacts are provided by serine 209, asparagine 214, lysine 215, and glutamate 218. Residue glutamate 218 participates in Mn(2+) binding.

This sequence belongs to the DXR family. The cofactor is Mg(2+). Mn(2+) serves as cofactor.

It carries out the reaction 2-C-methyl-D-erythritol 4-phosphate + NADP(+) = 1-deoxy-D-xylulose 5-phosphate + NADPH + H(+). The protein operates within isoprenoid biosynthesis; isopentenyl diphosphate biosynthesis via DXP pathway; isopentenyl diphosphate from 1-deoxy-D-xylulose 5-phosphate: step 1/6. Functionally, catalyzes the NADPH-dependent rearrangement and reduction of 1-deoxy-D-xylulose-5-phosphate (DXP) to 2-C-methyl-D-erythritol 4-phosphate (MEP). The polypeptide is 1-deoxy-D-xylulose 5-phosphate reductoisomerase (Ruminiclostridium cellulolyticum (strain ATCC 35319 / DSM 5812 / JCM 6584 / H10) (Clostridium cellulolyticum)).